The chain runs to 142 residues: Large ribosomal subunit protein bL17 (142 aa).

Belongs to the bacterial ribosomal protein bL17 family. As to quaternary structure, part of the 50S ribosomal subunit. Contacts protein L32.

In Wolbachia sp. subsp. Brugia malayi (strain TRS), this protein is Large ribosomal subunit protein bL17.